The sequence spans 307 residues: Alpha N-terminal protein methyltransferase 1 (307 aa).

Low complexity predominate over residues 38 to 54 (EPAPAPAAGSNGVAGEQ). A disordered region spans residues 38 to 60 (EPAPAPAAGSNGVAGEQEAGGGG). Residues Gly-123, Arg-128, 145–147 (EPV), 179–180 (LQ), and Gln-195 contribute to the S-adenosyl-L-methionine site.

This sequence belongs to the methyltransferase superfamily. NTM1 family.

The catalysed reaction is N-terminal L-alanyl-L-prolyl-L-lysyl-[protein] + 3 S-adenosyl-L-methionine = N-terminal N,N,N-trimethyl-L-alanyl-L-prolyl-L-lysyl-[protein] + 3 S-adenosyl-L-homocysteine + 3 H(+). It catalyses the reaction N-terminal L-seryl-L-prolyl-L-lysyl-[protein] + 3 S-adenosyl-L-methionine = N-terminal N,N,N-trimethyl-L-seryl-L-prolyl-L-lysyl-[protein] + 3 S-adenosyl-L-homocysteine + 3 H(+). It carries out the reaction N-terminal L-prolyl-L-prolyl-L-lysyl-[protein] + 2 S-adenosyl-L-methionine = N-terminal N,N-dimethyl-L-prolyl-L-prolyl-L-lysyl-[protein] + 2 S-adenosyl-L-homocysteine + 2 H(+). Alpha-N-methyltransferase that methylates the N-terminus of target proteins containing the N-terminal motif [Ala/Pro/Ser]-Pro-Lys when the initiator Met is cleaved. Specifically catalyzes mono-, di- or tri-methylation of exposed alpha-amino group of Ala or Ser residue in the [Ala/Ser]-Pro-Lys motif and mono- or di-methylation of Pro in the Pro-Pro-Lys motif. The protein is Alpha N-terminal protein methyltransferase 1 of Oryza sativa subsp. indica (Rice).